Reading from the N-terminus, the 332-residue chain is Anthranilate phosphoribosyltransferase (332 aa).

5-phospho-alpha-D-ribose 1-diphosphate-binding positions include Gly-78, 81-82, Ser-86, 88-91, 106-114, and Ser-118; these read GD, NIST, and KHGNKSITS. Residue Gly-78 participates in anthranilate binding. Residue Ser-90 participates in Mg(2+) binding. Asn-109 contacts anthranilate. Arg-163 serves as a coordination point for anthranilate. Positions 222 and 223 each coordinate Mg(2+).

The protein belongs to the anthranilate phosphoribosyltransferase family. Homodimer. Mg(2+) serves as cofactor.

The enzyme catalyses N-(5-phospho-beta-D-ribosyl)anthranilate + diphosphate = 5-phospho-alpha-D-ribose 1-diphosphate + anthranilate. It functions in the pathway amino-acid biosynthesis; L-tryptophan biosynthesis; L-tryptophan from chorismate: step 2/5. Catalyzes the transfer of the phosphoribosyl group of 5-phosphorylribose-1-pyrophosphate (PRPP) to anthranilate to yield N-(5'-phosphoribosyl)-anthranilate (PRA). The chain is Anthranilate phosphoribosyltransferase from Staphylococcus aureus (strain Mu3 / ATCC 700698).